The sequence spans 853 residues: DNA mismatch repair protein MutS (853 aa).

Residue 614 to 621 participates in ATP binding; the sequence is GPNMGGKS.

Belongs to the DNA mismatch repair MutS family.

Its function is as follows. This protein is involved in the repair of mismatches in DNA. It is possible that it carries out the mismatch recognition step. This protein has a weak ATPase activity. The polypeptide is DNA mismatch repair protein MutS (Escherichia coli O81 (strain ED1a)).